The chain runs to 581 residues: ATP-dependent lipid A-core flippase (581 aa).

5 consecutive transmembrane segments (helical) span residues 15 to 35, 62 to 82, 152 to 172, 252 to 272, and 274 to 294; these read LWPI…ALII, ISIW…SSGF, IIGL…VLII, IIIQ…SSLP, and IIDE…IALM. The ABC transmembrane type-1 domain occupies 27-309; that stretch reads IISIVALIIN…LTNVNANFQK (283 aa). Residues 341–577 enclose the ABC transporter domain; that stretch reads IKFKNITFTY…KGVYAQIYRL (237 aa). Residue 375–382 participates in ATP binding; the sequence is GSSGAGKS.

Belongs to the ABC transporter superfamily. Lipid exporter (TC 3.A.1.106) family. In terms of assembly, homodimer.

The protein localises to the cell membrane. The enzyme catalyses ATP + H2O + lipid A-core oligosaccharideSide 1 = ADP + phosphate + lipid A-core oligosaccharideSide 2.. Functionally, involved in lipopolysaccharide (LPS) biosynthesis. Translocates lipid A-core from the inner to the outer leaflet of the inner membrane. Transmembrane domains (TMD) form a pore in the inner membrane and the ATP-binding domain (NBD) is responsible for energy generation. The sequence is that of ATP-dependent lipid A-core flippase from Wigglesworthia glossinidia brevipalpis.